The following is a 533-amino-acid chain: Flavin-containing monooxygenase 5 (533 aa).

A Dimethylated arginine modification is found at arginine 5. Residues 10–14 (GGGVS), glutamate 33, and 41–42 (LW) contribute to the FAD site. Serine 54 is modified (phosphoserine). A Phosphotyrosine modification is found at tyrosine 56. Serine 58 bears the Phosphoserine mark. 62–63 (NT) contributes to the FAD binding site. 196-199 (SGGD) contributes to the NADP(+) binding site. Phosphoserine is present on serine 280. Threonine 284 carries the phosphothreonine modification. A Phosphoserine modification is found at serine 401. A helical membrane pass occupies residues 513-533 (TMTIGKFMLALAFFAIIIAYF).

The protein belongs to the FMO family. FAD is required as a cofactor. As to expression, expressed in fetal and adult liver.

Its subcellular location is the microsome membrane. It is found in the endoplasmic reticulum membrane. The catalysed reaction is N,N-dimethylaniline + NADPH + O2 + H(+) = N,N-dimethylaniline N-oxide + NADP(+) + H2O. The enzyme catalyses NADPH + O2 + H(+) = H2O2 + NADP(+). It catalyses the reaction heptan-2-one + NADPH + O2 + H(+) = pentyl acetate + NADP(+) + H2O. It carries out the reaction octan-3-one + NADPH + O2 + H(+) = pentyl propanoate + NADP(+) + H2O. The catalysed reaction is octan-3-one + NADPH + O2 + H(+) = ethyl hexanoate + NADP(+) + H2O. The enzyme catalyses hexan-3-one + NADPH + O2 + H(+) = ethyl butanoate + NADP(+) + H2O. It catalyses the reaction hexan-3-one + NADPH + O2 + H(+) = propyl propanoate + NADP(+) + H2O. It carries out the reaction heptan-4-one + NADPH + O2 + H(+) = propyl butanoate + NADP(+) + H2O. The catalysed reaction is (2E)-geranial + NADPH + O2 + H(+) = (1E)-2,6-dimethylhepta-1,5-dien-1-yl formate + NADP(+) + H2O. The enzyme catalyses sulcatone + NADPH + O2 + H(+) = 4-methylpent-3-en-1-yl acetate + NADP(+) + H2O. Acts as a Baeyer-Villiger monooxygenase on a broad range of substrates. Catalyzes the insertion of an oxygen atom into a carbon-carbon bond adjacent to a carbonyl, which converts ketones to esters. Active on diverse carbonyl compounds, whereas soft nucleophiles are mostly non- or poorly reactive. In contrast with other forms of FMO it is non- or poorly active on 'classical' substrates such as drugs, pesticides, and dietary components containing soft nucleophilic heteroatoms. Able to oxidize drug molecules bearing a carbonyl group on an aliphatic chain, such as nabumetone and pentoxifylline. Also, in the absence of substrates, shows slow but yet significant NADPH oxidase activity. Acts as a positive modulator of cholesterol biosynthesis as well as glucose homeostasis, promoting metabolic aging via pleiotropic effects. The chain is Flavin-containing monooxygenase 5 from Homo sapiens (Human).